The sequence spans 414 residues: Isocitrate dehydrogenase [NADP] cytoplasmic (414 aa).

Residue S2 is modified to N-acetylserine. A Phosphotyrosine modification is found at Y42. NADP(+) is bound at residue 75–77 (TIT). T77 is a binding site for substrate. K81 carries the N6-acetyllysine modification. R82 serves as a coordination point for NADP(+). Residues 94–100 (SPNGTIR) and R109 contribute to the substrate site. Residue K126 is modified to N6-succinyllysine. 2 residues coordinate substrate: R132 and K212. 3 positions are modified to N6-acetyllysine: K224, K233, and K243. D252 is a binding site for Mn(2+). K260 provides a ligand contact to NADP(+). Mn(2+) is bound by residues D275 and D279. 310–315 (GTVTRH) contributes to the NADP(+) binding site. The residue at position 321 (K321) is an N6-acetyllysine. Position 328 (N328) interacts with NADP(+). S389 bears the Phosphoserine mark. N6-succinyllysine is present on K400.

Belongs to the isocitrate and isopropylmalate dehydrogenases family. Homodimer. The cofactor is Mg(2+). Mn(2+) is required as a cofactor. Post-translationally, acetylation at Lys-374 dramatically reduces catalytic activity. In terms of tissue distribution, highly expressed in the liver followed by kidney, lower expression in spleen, brain and lung.

The protein resides in the cytoplasm. The protein localises to the cytosol. It carries out the reaction D-threo-isocitrate + NADP(+) = 2-oxoglutarate + CO2 + NADPH. Its activity is regulated as follows. Irreversibly inhibited by Cd(2+) concentrations above 50 uM. Its function is as follows. Catalyzes the NADP(+)-dependent oxidative decarboxylation of isocitrate (D-threo-isocitrate) to 2-ketoglutarate (2-oxoglutarate), which is required by other enzymes such as the phytanoyl-CoA dioxygenase. Plays a critical role in the generation of NADPH, an important cofactor in many biosynthesis pathways. May act as a corneal epithelial crystallin and may be involved in maintaining corneal epithelial transparency. The chain is Isocitrate dehydrogenase [NADP] cytoplasmic (Idh1) from Mus musculus (Mouse).